The sequence spans 92 residues: MADVTYRLVICGLVQGVFYRGSMVSRANALGLRGWVRNRLDGSVEAVVQGEATEVNRMVEWARRGPSNAVVTSVNIFPSEGDFVGFQLREST.

In terms of domain architecture, Acylphosphatase-like spans 5–90 (TYRLVICGLV…GDFVGFQLRE (86 aa)). Catalysis depends on residues arginine 20 and asparagine 38.

This sequence belongs to the acylphosphatase family.

The catalysed reaction is an acyl phosphate + H2O = a carboxylate + phosphate + H(+). The protein is Acylphosphatase (acyP) of Albidiferax ferrireducens (strain ATCC BAA-621 / DSM 15236 / T118) (Rhodoferax ferrireducens).